A 1512-amino-acid chain; its full sequence is Mitogen-activated protein kinase kinase kinase 1 (1512 aa).

Low complexity predominate over residues methionine 1–glycine 13. 3 disordered regions span residues methionine 1 to proline 37, serine 67 to glutamate 181, and valine 213 to threonine 304. Alanine 2 bears the N-acetylalanine mark. Serine 21 and serine 35 each carry phosphoserine. Low complexity-rich tracts occupy residues alanine 81–alanine 99, alanine 129–glutamate 142, and alanine 150–alanine 160. 2 positions are modified to phosphoserine: serine 137 and serine 154. Positions arginine 162–glutamate 181 are enriched in basic and acidic residues. Residues serine 250–arginine 260 are compositionally biased toward low complexity. Serine 275 carries the phosphoserine modification. A Phosphothreonine modification is found at threonine 285. Phosphoserine occurs at positions 292, 297, and 300. An SWIM-type zinc finger spans residues tyrosine 338–phenylalanine 366. Low complexity predominate over residues serine 416 to asparagine 433. A disordered region spans residues serine 416–lysine 436. The segment at cysteine 443–arginine 492 adopts an RING-type zinc-finger fold. 2 positions are modified to phosphoserine: serine 507 and serine 531. Disordered stretches follow at residues serine 511 to arginine 532 and serine 602 to glutamine 624. Over residues glycine 611–glutamine 624 the composition is skewed to low complexity. Phosphoserine is present on serine 923. The tract at residues serine 933 to leucine 972 is disordered. Residues serine 939–threonine 949 are compositionally biased toward low complexity. Serine 1018 is modified (phosphoserine). Over residues asparagine 1032 to lysine 1041 the composition is skewed to basic and acidic residues. The segment at asparagine 1032 to serine 1087 is disordered. Serine 1043 carries the post-translational modification Phosphoserine. Polar residues-rich tracts occupy residues valine 1045 to isoleucine 1057 and threonine 1066 to serine 1087. Positions tryptophan 1243–phenylalanine 1508 constitute a Protein kinase domain. Residues isoleucine 1249 to cysteine 1257 and lysine 1272 each bind ATP. The active-site Proton acceptor is the aspartate 1369. A phosphothreonine; by autocatalysis mark is found at threonine 1400 and threonine 1412.

The protein belongs to the protein kinase superfamily. STE Ser/Thr protein kinase family. MAP kinase kinase kinase subfamily. As to quaternary structure, binds both upstream activators and downstream substrates in multimolecular complexes through its N-terminus. Oligomerizes after binding MAP2K4 or TRAF2. Interacts with AXIN1. Interacts (via the kinase catalytic domain) with STK38. Interacts with GRIPAP1. Mg(2+) is required as a cofactor. In terms of processing, autophosphorylated.

It carries out the reaction L-seryl-[protein] + ATP = O-phospho-L-seryl-[protein] + ADP + H(+). It catalyses the reaction L-threonyl-[protein] + ATP = O-phospho-L-threonyl-[protein] + ADP + H(+). The enzyme catalyses S-ubiquitinyl-[E2 ubiquitin-conjugating enzyme]-L-cysteine + [acceptor protein]-L-lysine = [E2 ubiquitin-conjugating enzyme]-L-cysteine + N(6)-ubiquitinyl-[acceptor protein]-L-lysine.. With respect to regulation, activated by autophosphorylation on Thr-1400 and Thr-1412 following oligomerization. In terms of biological role, component of a protein kinase signal transduction cascade. Activates the ERK and JNK kinase pathways by phosphorylation of MAP2K1 and MAP2K4. May phosphorylate the MAPK8/JNK1 kinase. Activates CHUK and IKBKB, the central protein kinases of the NF-kappa-B pathway. The polypeptide is Mitogen-activated protein kinase kinase kinase 1 (MAP3K1) (Homo sapiens (Human)).